Consider the following 143-residue polypeptide: MELNTIKPASGAKHAKRRVGRGIGSGLGKTAGRGHKGQKSRAGGYHKVGFEGGQMPLQRRLPKRGFKSLTLKYNAEVTLADLQVLAADEVDVPTLKQAGLVGERAKVVKVIKSGELSKKVVLKGIGATAGAKAAIEAAGGSVA.

Residues 1 to 51 (MELNTIKPASGAKHAKRRVGRGIGSGLGKTAGRGHKGQKSRAGGYHKVGFE) form a disordered region. The span at 21–31 (RGIGSGLGKTA) shows a compositional bias: gly residues.

Belongs to the universal ribosomal protein uL15 family. Part of the 50S ribosomal subunit.

Functionally, binds to the 23S rRNA. This chain is Large ribosomal subunit protein uL15, found in Methylibium petroleiphilum (strain ATCC BAA-1232 / LMG 22953 / PM1).